The sequence spans 223 residues: Chalcone--flavanone isomerase 2 (223 aa).

Substrate-binding residues include Thr41, Asn106, and Ser183.

The protein belongs to the chalcone isomerase family.

It carries out the reaction a chalcone = a flavanone.. It participates in secondary metabolite biosynthesis; flavonoid biosynthesis. In terms of biological role, catalyzes the intramolecular cyclization of bicyclic chalcones into tricyclic (S)-flavanones. Responsible for the isomerization of 4,2',4',6'-tetrahydroxychalcone (also termed chalcone) into naringenin. This chain is Chalcone--flavanone isomerase 2 (CHI2), found in Arabidopsis thaliana (Mouse-ear cress).